A 968-amino-acid chain; its full sequence is Isoleucine--tRNA ligase (968 aa).

Residues 68 to 78 (PYANGALHMGH) carry the 'HIGH' region motif. Glu-582 is an L-isoleucyl-5'-AMP binding site. The short motif at 623–627 (KMSKS) is the 'KMSKS' region element. Lys-626 is a binding site for ATP. 4 residues coordinate Zn(2+): Cys-936, Cys-939, Cys-956, and Cys-959.

It belongs to the class-I aminoacyl-tRNA synthetase family. IleS type 1 subfamily. As to quaternary structure, monomer. It depends on Zn(2+) as a cofactor.

It is found in the cytoplasm. It catalyses the reaction tRNA(Ile) + L-isoleucine + ATP = L-isoleucyl-tRNA(Ile) + AMP + diphosphate. Its function is as follows. Catalyzes the attachment of isoleucine to tRNA(Ile). As IleRS can inadvertently accommodate and process structurally similar amino acids such as valine, to avoid such errors it has two additional distinct tRNA(Ile)-dependent editing activities. One activity is designated as 'pretransfer' editing and involves the hydrolysis of activated Val-AMP. The other activity is designated 'posttransfer' editing and involves deacylation of mischarged Val-tRNA(Ile). The chain is Isoleucine--tRNA ligase from Prochlorococcus marinus (strain AS9601).